Reading from the N-terminus, the 304-residue chain is Glycine--tRNA ligase alpha subunit (304 aa).

Belongs to the class-II aminoacyl-tRNA synthetase family. Tetramer of two alpha and two beta subunits.

The protein localises to the cytoplasm. It carries out the reaction tRNA(Gly) + glycine + ATP = glycyl-tRNA(Gly) + AMP + diphosphate. This chain is Glycine--tRNA ligase alpha subunit, found in Actinobacillus pleuropneumoniae serotype 3 (strain JL03).